We begin with the raw amino-acid sequence, 141 residues long: Large ribosomal subunit protein uL16 (141 aa).

Belongs to the universal ribosomal protein uL16 family. As to quaternary structure, part of the 50S ribosomal subunit.

Its function is as follows. Binds 23S rRNA and is also seen to make contacts with the A and possibly P site tRNAs. In Hydrogenobaculum sp. (strain Y04AAS1), this protein is Large ribosomal subunit protein uL16.